Reading from the N-terminus, the 390-residue chain is Histamine H4 receptor (390 aa).

Over 1–19 (MPDTNSTINLSLSTRVTLA) the chain is Extracellular. Residues Asn5 and Asn9 are each glycosylated (N-linked (GlcNAc...) asparagine). The chain crosses the membrane as a helical span at residues 20 to 40 (FFMSLVAFAIMLGNALVILAF). The Cytoplasmic segment spans residues 41 to 52 (VVDKNLRHRSSY). Residues 53–73 (FFLNLAISDFFVGVISIPLYI) traverse the membrane as a helical segment. The Extracellular portion of the chain corresponds to 74–87 (PHTLFEWDFGKEIC). A disulfide bridge connects residues Cys87 and Cys164. Residues 88–108 (VFWLTTDYLLCTASVYNIVLI) traverse the membrane as a helical segment. Residues 109 to 131 (SYDRYLSVSNAVSYRTQHTGVLK) are Cytoplasmic-facing. Residues 132–152 (IVTLMVAVWVLAFLVNGPMIL) form a helical membrane-spanning segment. Over 153–172 (VSESWKDEGSECEPGFFSEW) the chain is Extracellular. A helical transmembrane segment spans residues 173–193 (YILAITSFLEFVIPVILVAYF). The Cytoplasmic segment spans residues 194–304 (NMNIYWSLWK…LLRARRLAKS (111 aa)). The helical transmembrane segment at 305 to 325 (LAILLGVFAVCWAPYSLFTIV) threads the bilayer. Residues 326–341 (LSFYSSATGPKSVWYR) lie on the Extracellular side of the membrane. The chain crosses the membrane as a helical span at residues 342 to 362 (IAFWLQWFNSFVNPLLYPLCH). Residues 363 to 390 (KRFQKAFLKIFCIKKQPLPSQHSRSVSS) lie on the Cytoplasmic side of the membrane.

This sequence belongs to the G-protein coupled receptor 1 family. As to quaternary structure, interacts with TSPAN4. In terms of tissue distribution, expressed primarily in the bone marrow and eosinophils. Shows preferential distribution in cells of immunological relevance such as T-cells, dendritic cells, monocytes, mast cells, neutrophils. Also expressed in a wide variety of peripheral tissues, including the heart, kidney, liver, lung, pancreas, skeletal muscle, prostate, small intestine, spleen, testis, colon, fetal liver and lymph node.

The protein resides in the cell membrane. In terms of biological role, the H4 subclass of histamine receptors could mediate the histamine signals in peripheral tissues. Displays a significant level of constitutive activity (spontaneous activity in the absence of agonist). The sequence is that of Histamine H4 receptor (HRH4) from Homo sapiens (Human).